An 82-amino-acid chain; its full sequence is Small ribosomal subunit protein uS17 (82 aa).

The protein belongs to the universal ribosomal protein uS17 family. As to quaternary structure, part of the 30S ribosomal subunit.

One of the primary rRNA binding proteins, it binds specifically to the 5'-end of 16S ribosomal RNA. This Afipia carboxidovorans (strain ATCC 49405 / DSM 1227 / KCTC 32145 / OM5) (Oligotropha carboxidovorans) protein is Small ribosomal subunit protein uS17.